Here is a 71-residue protein sequence, read N- to C-terminus: DNA-directed RNA polymerase subunit omega (71 aa).

It belongs to the RNA polymerase subunit omega family. As to quaternary structure, the RNAP catalytic core consists of 2 alpha, 1 beta/beta' and 1 omega subunit. When a sigma factor is associated with the core the holoenzyme is formed, which can initiate transcription.

It catalyses the reaction RNA(n) + a ribonucleoside 5'-triphosphate = RNA(n+1) + diphosphate. Promotes RNA polymerase assembly. Latches the N- and C-terminal regions of the beta' subunit thereby facilitating its interaction with the beta and alpha subunits. In Wolinella succinogenes (strain ATCC 29543 / DSM 1740 / CCUG 13145 / JCM 31913 / LMG 7466 / NCTC 11488 / FDC 602W) (Vibrio succinogenes), this protein is DNA-directed RNA polymerase subunit omega.